We begin with the raw amino-acid sequence, 170 residues long: Large ribosomal subunit protein uL22z (170 aa).

It belongs to the universal ribosomal protein uL22 family.

This chain is Large ribosomal subunit protein uL22z, found in Hordeum vulgare (Barley).